A 356-amino-acid chain; its full sequence is Heme A synthase (356 aa).

5 consecutive transmembrane segments (helical) span residues 24 to 44 (IAIW…VGGV), 106 to 126 (FHRL…VYFM), 139 to 159 (LLGI…MVMS), 174 to 194 (AHLG…TGLI), and 214 to 234 (AWML…VAGI). A heme-binding site is contributed by H276. 3 helical membrane passes run 278–298 (LIAW…KQLS), 309–329 (LLLL…LLSV), and 331–351 (LTFA…ALWV). H337 is a heme binding site.

This sequence belongs to the COX15/CtaA family. Type 2 subfamily. In terms of assembly, interacts with CtaB. Heme b is required as a cofactor.

It is found in the cell membrane. It carries out the reaction Fe(II)-heme o + 2 A + H2O = Fe(II)-heme a + 2 AH2. It functions in the pathway porphyrin-containing compound metabolism; heme A biosynthesis; heme A from heme O: step 1/1. Its function is as follows. Catalyzes the conversion of heme O to heme A by two successive hydroxylations of the methyl group at C8. The first hydroxylation forms heme I, the second hydroxylation results in an unstable dihydroxymethyl group, which spontaneously dehydrates, resulting in the formyl group of heme A. The chain is Heme A synthase from Nitrosomonas eutropha (strain DSM 101675 / C91 / Nm57).